Here is a 559-residue protein sequence, read N- to C-terminus: Excitatory amino acid transporter 5 (559 aa).

At Met1–His16 the chain is on the cytoplasmic side. 3 consecutive transmembrane segments (helical) span residues Asn17–Leu37, Met60–Leu80, and Ala94–Ile114. Residues His115–Thr215 are Extracellular-facing. Asn190 carries an N-linked (GlcNAc...) asparagine glycan. The chain crosses the membrane as a helical span at residues Ser216 to Gly236. Asn253 is a glycosylation site (N-linked (GlcNAc...) asparagine). The next 6 membrane-spanning stretches (helical) occupy residues Ile259–Ile279, Thr298–Ile318, Gly329–Ile349, Val371–Ile391, Ala413–Leu433, and Phe456–Cys476.

Belongs to the dicarboxylate/amino acid:cation symporter (DAACS) (TC 2.A.23) family. SLC1A7 subfamily. As to quaternary structure, interacts with the PDZ domains of DLG4. As to expression, expressed in retina, located in both cone and rod photoreceptor terminals and in axon terminals of rod bipolar cells.

The protein localises to the photoreceptor inner segment membrane. It localises to the synaptic cell membrane. It catalyses the reaction K(+)(in) + L-glutamate(out) + 3 Na(+)(out) + H(+)(out) = K(+)(out) + L-glutamate(in) + 3 Na(+)(in) + H(+)(in). The catalysed reaction is K(+)(in) + L-aspartate(out) + 3 Na(+)(out) + H(+)(out) = K(+)(out) + L-aspartate(in) + 3 Na(+)(in) + H(+)(in). The enzyme catalyses D-aspartate(out) + K(+)(in) + 3 Na(+)(out) + H(+)(out) = D-aspartate(in) + K(+)(out) + 3 Na(+)(in) + H(+)(in). In terms of biological role, sodium-dependent, high-affinity amino acid transporter that mediates the uptake of L-glutamate and also L-aspartate and D-aspartate. Functions as a symporter that transports one amino acid molecule together with two or three Na(+) ions and one proton, in parallel with the counter-transport of one K(+) ion. Acts primarily as an inhibitory glutamate-gated chloride channel being a major inhibitory presynaptic receptor at mammalian rod bipolar cell axon terminals. Glutamate binding gates a large Cl(-) conductance that mediates inhibition, affecting visual processing in the retina. This chain is Excitatory amino acid transporter 5, found in Mus musculus (Mouse).